Reading from the N-terminus, the 103-residue chain is Large ribosomal subunit protein bL21 (103 aa).

Belongs to the bacterial ribosomal protein bL21 family. Part of the 50S ribosomal subunit. Contacts protein L20.

Functionally, this protein binds to 23S rRNA in the presence of protein L20. This is Large ribosomal subunit protein bL21 from Nitrosomonas europaea (strain ATCC 19718 / CIP 103999 / KCTC 2705 / NBRC 14298).